The following is a 133-amino-acid chain: Small ribosomal subunit protein uS8 (133 aa).

It belongs to the universal ribosomal protein uS8 family. As to quaternary structure, part of the 30S ribosomal subunit. Contacts proteins S5 and S12.

One of the primary rRNA binding proteins, it binds directly to 16S rRNA central domain where it helps coordinate assembly of the platform of the 30S subunit. In Synechococcus sp. (strain RCC307), this protein is Small ribosomal subunit protein uS8.